The primary structure comprises 625 residues: Probable potassium transport system protein Kup 2 (625 aa).

The next 12 membrane-spanning stretches (helical) occupy residues 15–35 (LSFA…LYAF), 52–72 (ILSL…LVIV), 98–118 (GGWL…DGIL), 134–154 (LSPN…FFLF), 164–184 (IGIY…VLGF), 203–223 (IYFF…VFLV), 246–266 (WFAV…AFVL), 284–304 (FLPV…QAII), 336–356 (VYLP…VVIF), 365–385 (AYGI…GIIA), 394–414 (FKVM…AGNI), and 417–437 (LLTG…VMYT).

It belongs to the HAK/KUP transporter (TC 2.A.72) family.

The protein resides in the cell inner membrane. The enzyme catalyses K(+)(in) + H(+)(in) = K(+)(out) + H(+)(out). Its function is as follows. Transport of potassium into the cell. Likely operates as a K(+):H(+) symporter. In Legionella pneumophila subsp. pneumophila (strain Philadelphia 1 / ATCC 33152 / DSM 7513), this protein is Probable potassium transport system protein Kup 2.